We begin with the raw amino-acid sequence, 59 residues long: Small ribosomal subunit protein bS21 (59 aa).

Residues Lys34–Phe59 are disordered. Positions Val43 to Phe59 are enriched in basic residues.

The protein belongs to the bacterial ribosomal protein bS21 family.

The sequence is that of Small ribosomal subunit protein bS21 from Desulforudis audaxviator (strain MP104C).